A 689-amino-acid polypeptide reads, in one-letter code: MTKEWECRREQIIELSKINGMTIRELQARMSKMYKFDASIRSYKRVLARWGIRVHRQRFVSPRTEEAAARTASGDVSKALDELVTQLFHARQSDKDSLAQIEANFGLKLSKRALHYRRKRLALKRPPPDSHDSPNNSIPLMANSCLLSADNSSSSTTSNPNVAPPISTLPDPVATISSSSSSHLDMGAIHPPHHSSLPPHMGVDPSTMADAHNAHSSLTPPQSGYSSMPSLPYLQQPFQIPSQRFSRQQQSHPFPAAQHAVNGQPQALYPFIYQSRNVPMGSTMFASSNQSAAHPDGNNALPMDNTHANISYMQSSQSMPVNSYSYDRYTPNQPSYLESKPGNHQPSYTSEQPMYSTASVPQQISNGPTAVNGLPMNSYTPHSNHLHSPSPNSNSGPTDSLSAPNSTSSPSMAHANGASFASQYPSLNKSIFPASYSSSAEDGQNMQAPAHAYMQSSIYGVNQEQKSEYPSNLSMQSSMSIKDPSQLQRIHLYPQHSQYDPNGMTMRDHYSERIEPEAKPSDETLTVRSSRDLSVHNVGTLPVLSAAAATQAAMPHTMGPSAHDSASAPSPHMQSQQALPYQYYNPLPAMADPAQNVPQQLPPPIHSHLSDDQHIQYSYPNTFVNRFPQNIHHPSANLLDASAALNPVQNPLLMPQQNHEHSPLVRSDAALHDHGPLLPVYPDVDSRFV.

Disordered stretches follow at residues 121–206, 286–305, 322–414, and 552–611; these read LALK…VDPS, ASSN…PMDN, NSYS…SMAH, and AAMP…HLSD. Low complexity predominate over residues 133–158; it reads SPNNSIPLMANSCLLSADNSSSSTTS. Positions 322-380 are enriched in polar residues; that stretch reads NSYSYDRYTPNQPSYLESKPGNHQPSYTSEQPMYSTASVPQQISNGPTAVNGLPMNSYT. Low complexity-rich tracts occupy residues 381-411 and 560-572; these read PHSN…SSPS and PSAH…PSPH.

Its subcellular location is the cytoplasm. This is an uncharacterized protein from Schizosaccharomyces pombe (strain 972 / ATCC 24843) (Fission yeast).